The sequence spans 513 residues: ATP synthase subunit alpha (513 aa).

169–176 (GDRQTGKT) serves as a coordination point for ATP.

Belongs to the ATPase alpha/beta chains family. In terms of assembly, F-type ATPases have 2 components, CF(1) - the catalytic core - and CF(0) - the membrane proton channel. CF(1) has five subunits: alpha(3), beta(3), gamma(1), delta(1), epsilon(1). CF(0) has three main subunits: a(1), b(2) and c(9-12). The alpha and beta chains form an alternating ring which encloses part of the gamma chain. CF(1) is attached to CF(0) by a central stalk formed by the gamma and epsilon chains, while a peripheral stalk is formed by the delta and b chains.

It localises to the cell inner membrane. The enzyme catalyses ATP + H2O + 4 H(+)(in) = ADP + phosphate + 5 H(+)(out). In terms of biological role, produces ATP from ADP in the presence of a proton gradient across the membrane. The alpha chain is a regulatory subunit. The protein is ATP synthase subunit alpha of Cupriavidus metallidurans (strain ATCC 43123 / DSM 2839 / NBRC 102507 / CH34) (Ralstonia metallidurans).